Here is a 426-residue protein sequence, read N- to C-terminus: Tetracenomycin polyketide synthase ketoacyl synthase alpha subunit (426 aa).

One can recognise a Ketosynthase family 3 (KS3) domain in the interval 6–420 (EKRVVITGIG…GFQSAAVLAR (415 aa)). Catalysis depends on for beta-ketoacyl synthase activity residues cysteine 173, histidine 313, and histidine 350.

Belongs to the thiolase-like superfamily. Beta-ketoacyl-ACP synthases family. The tetracenomycin polyketide synthase (TCM PKS) is composed of a ketosynthase complex (TcmKL), an acyl carrier protein (TcmM), a cyclase (TcmN) and a probable second cyclase (TcmJ). TcmK and TcmL form a heterodimeric complex.

The catalysed reaction is 10 malonyl-CoA + 8 H(+) = tetracenomycin F2 + 10 CO2 + 10 CoA + 2 H2O. It participates in antibiotic biosynthesis; tetracenomycin C biosynthesis. Its function is as follows. Involved in the biosynthesis of tetracenomycin C (TCM C). Part of a type II polyketide synthase (PKS) that catalyzes the synthesis of tetracenomycin F2 (TCM F2), a precursor of TCM C, from malonyl-CoA. TcmK and TcmL form a heterodimeric alpha-beta complex that catalyzes the condensation reactions between the growing acyl-enzyme chain and the malonyl-CoA extender units. The chain is Tetracenomycin polyketide synthase ketoacyl synthase alpha subunit from Streptomyces glaucescens.